The sequence spans 245 residues: Collagen triple helix repeat-containing protein 1 (245 aa).

The signal sequence occupies residues 1 to 32; the sequence is MHPQGRAAPPQLLLGLFLVLLLLLQLSAPISA. The Collagen-like domain maps to 59-92; sequence QGPAGVPGRDGSPGANGIPGTPGIPGRDGFKGEK. The disordered stretch occupies residues 64-87; that stretch reads VPGRDGSPGANGIPGTPGIPGRDG. Asn188 carries an N-linked (GlcNAc...) asparagine glycan.

In terms of processing, N-glycosylated.

It is found in the secreted. The protein resides in the extracellular space. It localises to the extracellular matrix. Its function is as follows. May act as a negative regulator of collagen matrix deposition. The polypeptide is Collagen triple helix repeat-containing protein 1 (Cthrc1) (Mus musculus (Mouse)).